Here is a 375-residue protein sequence, read N- to C-terminus: MQKLQISVYIYLFMLIVAGPVDLNENSEQKENVEKDGLCNACTWGQNSKYSRIEAIKIQILSKLRLGTAPNISEDAIRQLLPKAPPLRELIDQYDVQRDDSSDGSLEDDDYHATTETIITMPTESDFLMQVEGKPKCCFFKFSSKIQYNKVVKAQLWIYLRPVKTPTTVFVQILRLIKPMKDGTRYTGIRSLKLDMNPGTGIWQSIDVKTVLQNWLKQPESNLGIEIKALDENGHDLAVTFPGPGEDGLNPFLEVKVTDTPKRSRRDFGLDCDEHSTESRCCRYPLTVDFEAFGWDWIIAPKRYKANYCSGECEFVFLQKYPHTHLVHQANPRGSAGPCCTPTKMSPINMLYFNGEGQIIYGKIPAMVVDRCGCS.

Residues 1 to 18 (MQKLQISVYIYLFMLIVA) form the signal peptide. Residues 19–266 (GPVDLNENSE…VTDTPKRSRR (248 aa)) constitute a propeptide that is removed on maturation. Residue asparagine 71 is glycosylated (N-linked (GlcNAc...) asparagine). 4 disulfides stabilise this stretch: cysteine 272-cysteine 282, cysteine 281-cysteine 340, cysteine 309-cysteine 372, and cysteine 313-cysteine 374.

The protein belongs to the TGF-beta family. As to quaternary structure, homodimer; disulfide-linked. Interacts with WFIKKN2, leading to inhibit its activity. Interacts with FSTL3. Synthesized as large precursor molecule that undergoes proteolytic cleavage to generate an N-terminal propeptide and a disulfide linked C-terminal dimer, which is the biologically active molecule. The circulating form consists of a latent complex of the C-terminal dimer and other proteins, including its propeptide, which maintain the C-terminal dimer in a latent, inactive state. Ligand activation requires additional cleavage of the prodomain by a tolloid-like metalloproteinase.

It is found in the secreted. Acts specifically as a negative regulator of skeletal muscle growth. This Lepus capensis (Brown hare) protein is Growth/differentiation factor 8 (MSTN).